We begin with the raw amino-acid sequence, 262 residues long: Small ribosomal subunit protein mS23 (262 aa).

Residues 211-262 (SGQSDEAPEGEGSDMSAGEYDMAVEELAGQGSIPNTPQSTVVPEGTSAPAHA) form a disordered region. A compositionally biased stretch (polar residues) spans 242 to 251 (SIPNTPQSTV).

This sequence belongs to the mitochondrion-specific ribosomal protein mS23 family. Component of the mitochondrial small ribosomal subunit.

It is found in the mitochondrion. In Phaeosphaeria nodorum (strain SN15 / ATCC MYA-4574 / FGSC 10173) (Glume blotch fungus), this protein is Small ribosomal subunit protein mS23 (RSM25).